The primary structure comprises 267 residues: MVSPAAPDLTDDLTDAELAADLAADAGKLLLQVRAEIGFDQPWTLGEAGDRQANSLLLRRLQAERPGDAVLSEEAHDDLARLKSDRVWIIDPLDGTREFSTPGRDDWAVHIALWRRSSNGQPEITDAAVALPARGNVVYRTDTVTSGAAPAGVPGTLRIAVSATRPPAVLHRIRQTLAIQPVSIGSAGAKAMAVIDGYVDAYLHAGGQWEWDSAAPAGVMLAAGMHASRLDGSPLRYNQLDPYLPDLLMCRAEVAPILLGAIADAWR.

Glu-73, Asp-91, Leu-93, Asp-94, and Asp-212 together coordinate Mg(2+). A substrate-binding site is contributed by Glu-73. Substrate contacts are provided by residues 93-96 and Asp-212; that span reads LDGT.

The protein belongs to the inositol monophosphatase superfamily. As to quaternary structure, homodimer. Mg(2+) serves as cofactor.

It carries out the reaction adenosine 3',5'-bisphosphate + H2O = AMP + phosphate. It catalyses the reaction beta-D-fructose 1,6-bisphosphate + H2O = beta-D-fructose 6-phosphate + phosphate. The enzyme catalyses a myo-inositol phosphate + H2O = myo-inositol + phosphate. It participates in sulfur metabolism; sulfate assimilation. In terms of biological role, phosphatase with a broad specificity. Its primary physiological function is to dephosphorylate 3'-phosphoadenosine 5'-phosphate (PAP) and 3'-phosphoadenosine 5'-phosphosulfate (PAPS). Thus, plays a role in mycobacterial sulfur metabolism, since it can serve as a key regulator of the sulfate assimilation pathway by controlling the pools of PAP and PAPS in the cell. To a lesser extent, is also able to hydrolyze inositol 1-phosphate (I-1-P), fructose 1,6-bisphosphate (FBP) (to fructose 6-phosphate (F-6-P)) and AMP in vitro, but this might not be significant in vivo. The polypeptide is 3'-phosphoadenosine 5'-phosphate phosphatase (cysQ) (Mycobacterium bovis (strain ATCC BAA-935 / AF2122/97)).